A 339-amino-acid chain; its full sequence is Senescence-specific cysteine protease SAG39 (339 aa).

The first 23 residues, 1 to 23 (MAMAKALLFAILGCLCLCSAVLA), serve as a signal peptide directing secretion. 3 disulfides stabilise this stretch: C144–C187, C178–C220, and C276–C328. C147 is a catalytic residue. Active-site residues include H282 and N303.

This sequence belongs to the peptidase C1 family. In terms of tissue distribution, low expression in mature leaves.

It localises to the vacuole. In terms of biological role, cysteine protease that may have a developmental senescence specific cell death function during apoptosis, heavy metal detoxification, and hypersensitive response. This is Senescence-specific cysteine protease SAG39 from Oryza sativa subsp. japonica (Rice).